Reading from the N-terminus, the 200-residue chain is MSLFALCYMFAAYLLGSISSAVIVCRLAGLPDPRRHGSHNPGATNVLRIGGRWAALAVFVFDVLKGMIPVWCGYYLGLTQFELGMVALGACLGHIFPIFFKFRGGKGVATAFGAIAPIGWGVMATMLGTWVLVFVISGYSSLSAVISALLVPLYVWWFRPEFTFPVALVCCLLVYRHHDNIQRLWRGQEDRIWGKKSNKK.

The next 5 helical transmembrane spans lie at 4–24, 53–73, 80–100, 115–135, and 138–158; these read FALC…AVIV, WAAL…VWCG, QFEL…PIFF, IAPI…LVFV, and GYSS…VWWF.

This sequence belongs to the PlsY family. As to quaternary structure, probably interacts with PlsX.

Its subcellular location is the cell inner membrane. The enzyme catalyses an acyl phosphate + sn-glycerol 3-phosphate = a 1-acyl-sn-glycero-3-phosphate + phosphate. The protein operates within lipid metabolism; phospholipid metabolism. Functionally, catalyzes the transfer of an acyl group from acyl-phosphate (acyl-PO(4)) to glycerol-3-phosphate (G3P) to form lysophosphatidic acid (LPA). This enzyme utilizes acyl-phosphate as fatty acyl donor, but not acyl-CoA or acyl-ACP. The chain is Glycerol-3-phosphate acyltransferase from Actinobacillus succinogenes (strain ATCC 55618 / DSM 22257 / CCUG 43843 / 130Z).